A 73-amino-acid chain; its full sequence is Cytochrome b559 subunit alpha (73 aa).

A helical transmembrane segment spans residues 21-35 (IIHSITVPSLFIAGW). A heme-binding site is contributed by histidine 23.

Belongs to the PsbE/PsbF family. In terms of assembly, heterodimer of an alpha subunit and a beta subunit. PSII is composed of 1 copy each of membrane proteins PsbA, PsbB, PsbC, PsbD, PsbE, PsbF, PsbH, PsbI, PsbJ, PsbK, PsbL, PsbM, PsbT, PsbY, PsbZ, Psb30/Ycf12, at least 3 peripheral proteins of the oxygen-evolving complex and a large number of cofactors. It forms dimeric complexes. It depends on heme b as a cofactor.

The protein localises to the plastid. It localises to the chloroplast thylakoid membrane. This b-type cytochrome is tightly associated with the reaction center of photosystem II (PSII). PSII is a light-driven water:plastoquinone oxidoreductase that uses light energy to abstract electrons from H(2)O, generating O(2) and a proton gradient subsequently used for ATP formation. It consists of a core antenna complex that captures photons, and an electron transfer chain that converts photonic excitation into a charge separation. This is Cytochrome b559 subunit alpha from Bigelowiella natans (Pedinomonas minutissima).